Here is a 266-residue protein sequence, read N- to C-terminus: Serine/arginine-rich splicing factor 12 (266 aa).

Residues 42 to 266 are disordered; the sequence is ARPRRPRAPR…SRSYHHKNSW (225 aa). The segment covering 43-62 has biased composition (basic residues); sequence RPRRPRAPRPRLRLRGRPGR. Residues 102 to 114 show a composition bias toward basic and acidic residues; it reads KSKERHLCSPSDH. Basic residues predominate over residues 115–127; sequence RRSRSPSQRRSRS. Residues 133–144 are compositionally biased toward basic and acidic residues; the sequence is GRDRRHSDSLKE. Positions 151-166 are enriched in low complexity; that stretch reads SYSQSKSRSKSLPRQS. Positions 183–194 are enriched in basic residues; the sequence is GRSRSKSLPKRS. 2 stretches are compositionally biased toward polar residues: residues 202-212 and 235-244; these read SRSPQKQTGSG and AYTSSGSKTQ. A compositionally biased stretch (basic residues) spans 245 to 266; that stretch reads TTKHSHLRSHSRSRSYHHKNSW.

It belongs to the splicing factor SR family.

Its subcellular location is the nucleus. Splicing factor that seems to antagonize SR proteins in pre-mRNA splicing regulation. This is Serine/arginine-rich splicing factor 12 (Srsf12) from Mus musculus (Mouse).